Consider the following 357-residue polypeptide: MSQSGKNGLTYSDAGVDIDAGNLMVEKIKPAVRSTRRPGADGEIGGFGGLFDLKAAGFTDPVLVAANDGVGTKLKIAIDADYHDTVGIDLVAMCVNDLVVQGAEPLFFLDYFATGKLDPDQGAAIVSGIAAGCRESGCALIGGETAEMPGMYSDGDYDLAGFAVGAAERGQLLPAGDIAEGDVILGLSSSGVHSNGFSLVRKIVSLSGLEWSAPAPFADGKKLGEALLTPTRIYVKPLLKAIRETGALKALAHITGGGFPENIPRVLPKHLAAEIDLAAIKVPAVFSWLAKTGGVEAHEMLRTFNCGVGMIVVVSAENATKVTEALTAEGETVFPLGRMVAREDGAHGTIYKGTLGL.

It belongs to the AIR synthase family.

It localises to the cytoplasm. The enzyme catalyses 2-formamido-N(1)-(5-O-phospho-beta-D-ribosyl)acetamidine + ATP = 5-amino-1-(5-phospho-beta-D-ribosyl)imidazole + ADP + phosphate + H(+). The protein operates within purine metabolism; IMP biosynthesis via de novo pathway; 5-amino-1-(5-phospho-D-ribosyl)imidazole from N(2)-formyl-N(1)-(5-phospho-D-ribosyl)glycinamide: step 2/2. The polypeptide is Phosphoribosylformylglycinamidine cyclo-ligase (Agrobacterium fabrum (strain C58 / ATCC 33970) (Agrobacterium tumefaciens (strain C58))).